The sequence spans 72 residues: uncharacterized protein (72 aa).

Residues 1-53 (MTNEPSTSTPTSTSTSTSTSTSTSTTTLTSTSSTPTSTSTSTSTSTSTSTSTS) form a disordered region.

This is an uncharacterized protein from Dictyostelium discoideum (Social amoeba).